A 478-amino-acid chain; its full sequence is Glutamine synthetase (478 aa).

Residue Lys14 forms an Isoglutamyl lysine isopeptide (Lys-Gln) (interchain with Q-Cter in protein Pup) linkage. Residues 16–100 enclose the GS beta-grasp domain; that stretch reads ENVEYVDIRF…MNFFVHDPFT (85 aa). Residues 108–478 enclose the GS catalytic domain; that stretch reads PRNVARKAEN…PYEFSLYYDV (371 aa). Glu133 and Glu135 together coordinate Mg(2+). Glu214 lines the ATP pocket. Residues Glu219 and Glu227 each contribute to the Mg(2+) site. 230-232 serves as a coordination point for ATP; sequence YKF. Residues 271–272 and Gly272 contribute to the L-glutamate site; that span reads NG. His276 serves as a coordination point for Mg(2+). Residues 278–280 and Ser280 each bind ATP; that span reads HQS. The L-glutamate site is built by Arg329, Glu335, and Arg347. 3 residues coordinate ATP: Arg347, Arg352, and Lys361. Glu366 contacts Mg(2+). An L-glutamate-binding site is contributed by Arg368. Tyr406 is modified (O-AMP-tyrosine).

Belongs to the glutamine synthetase family. In terms of assembly, oligomer of 12 subunits arranged in the form of two hexagons. The cofactor is Mg(2+).

The protein resides in the cytoplasm. The catalysed reaction is L-glutamate + NH4(+) + ATP = L-glutamine + ADP + phosphate + H(+). Its activity is regulated as follows. When cellular nitrogen levels are high, the C-terminal adenylyl transferase (AT) of GlnE inhibits GlnA by covalent transfer of an adenylyl group from ATP to Tyr-406. Conversely, when nitrogen levels are low, the N-terminal adenylyl removase (AR) of GlnE activates GlnA by removing the adenylyl group by phosphorolysis. The fully adenylated enzyme complex is inactive. In terms of biological role, involved in nitrogen metabolism via ammonium assimilation. Catalyzes the ATP-dependent biosynthesis of glutamine from glutamate and ammonia. The chain is Glutamine synthetase from Mycolicibacterium smegmatis (strain ATCC 700084 / mc(2)155) (Mycobacterium smegmatis).